Here is a 291-residue protein sequence, read N- to C-terminus: Protein ZAR1-like (291 aa).

The segment at 103–152 is disordered; sequence GSQTLHSSSLSDRTSSRKPTEAWEVGRRALIRRPQDGEDEESQEELTGPT. Positions 106–115 are enriched in low complexity; that stretch reads TLHSSSLSDR. The span at 116-129 shows a compositional bias: basic and acidic residues; sequence TSSRKPTEAWEVGR. The 3CxxC-type zinc finger occupies 195–280; the sequence is LKYGYFHCKD…QELCGHCKDK (86 aa).

The protein belongs to the ZAR1 family. As to quaternary structure, interacts with YBX2. In terms of tissue distribution, expressed in oocytes and zygotes. Predominantly expressed in maturing oocytes before maternal-to-zygotic transition (MZT). Less abundant than Zar1.

Its subcellular location is the cytoplasm. The protein resides in the cytoplasmic ribonucleoprotein granule. In terms of biological role, mRNA-binding protein required for maternal mRNA storage, translation and degradation during oocyte maturation. Probably promotes formation of some phase-separated membraneless compartment that stores maternal mRNAs in oocytes: acts by undergoing liquid-liquid phase separation upon binding to maternal mRNAs. Binds to the 3'-UTR of maternal mRNAs, inhibiting their translation. This chain is Protein ZAR1-like, found in Mus musculus (Mouse).